An 81-amino-acid chain; its full sequence is MKTLLLTLVVVTIVCLDLGYTMTCCNQQSSQPKTTTNCAESSCYKKTWSDHRGTRIERGCGCPQVKHGIKLECCHTNECNN.

The N-terminal stretch at 1-21 is a signal peptide; that stretch reads MKTLLLTLVVVTIVCLDLGYT. 4 disulfides stabilise this stretch: cysteine 24-cysteine 43, cysteine 38-cysteine 60, cysteine 62-cysteine 73, and cysteine 74-cysteine 79.

The protein belongs to the three-finger toxin family. Short-chain subfamily. Type I alpha-neurotoxin sub-subfamily. In terms of tissue distribution, expressed by the venom gland.

It localises to the secreted. In terms of biological role, binds to muscle nicotinic acetylcholine receptor (nAChR) and inhibit acetylcholine from binding to the receptor, thereby impairing neuromuscular transmission. The protein is Short neurotoxin 2 of Hydrophis hardwickii (Hardwick's spine-bellied seasnake).